The following is a 193-amino-acid chain: Xanthine phosphoribosyltransferase (193 aa).

Xanthine is bound by residues L20 and T27. Residue 128–132 (ANGQA) participates in 5-phospho-alpha-D-ribose 1-diphosphate binding. K156 lines the xanthine pocket.

It belongs to the purine/pyrimidine phosphoribosyltransferase family. Xpt subfamily. As to quaternary structure, homodimer.

It localises to the cytoplasm. It catalyses the reaction XMP + diphosphate = xanthine + 5-phospho-alpha-D-ribose 1-diphosphate. It participates in purine metabolism; XMP biosynthesis via salvage pathway; XMP from xanthine: step 1/1. Its function is as follows. Converts the preformed base xanthine, a product of nucleic acid breakdown, to xanthosine 5'-monophosphate (XMP), so it can be reused for RNA or DNA synthesis. This chain is Xanthine phosphoribosyltransferase, found in Streptococcus gordonii (strain Challis / ATCC 35105 / BCRC 15272 / CH1 / DL1 / V288).